The primary structure comprises 346 residues: UDP-3-O-acylglucosamine N-acyltransferase (346 aa).

The Proton acceptor role is filled by H253.

Belongs to the transferase hexapeptide repeat family. LpxD subfamily. Homotrimer.

The enzyme catalyses a UDP-3-O-[(3R)-3-hydroxyacyl]-alpha-D-glucosamine + a (3R)-hydroxyacyl-[ACP] = a UDP-2-N,3-O-bis[(3R)-3-hydroxyacyl]-alpha-D-glucosamine + holo-[ACP] + H(+). It participates in bacterial outer membrane biogenesis; LPS lipid A biosynthesis. In terms of biological role, catalyzes the N-acylation of UDP-3-O-acylglucosamine using 3-hydroxyacyl-ACP as the acyl donor. Is involved in the biosynthesis of lipid A, a phosphorylated glycolipid that anchors the lipopolysaccharide to the outer membrane of the cell. This is UDP-3-O-acylglucosamine N-acyltransferase from Rickettsia peacockii (strain Rustic).